A 110-amino-acid chain; its full sequence is Thioredoxin (110 aa).

The Thioredoxin domain maps to 2–110 (SALLVEIDKD…IDAMIAKHVG (109 aa)). Cysteine 33 and cysteine 36 form a disulfide bridge.

Belongs to the thioredoxin family.

Functionally, participates in various redox reactions through the reversible oxidation of its active center dithiol to a disulfide and catalyzes dithiol-disulfide exchange reactions. This chain is Thioredoxin (trxA), found in Peptoclostridium acidaminophilum (Eubacterium acidaminophilum).